Consider the following 67-residue polypeptide: Large ribosomal subunit protein bL35 (67 aa).

Residues 1-16 are compositionally biased toward basic residues; that stretch reads MPKMKTKSGAKKRFRV. The interval 1 to 24 is disordered; the sequence is MPKMKTKSGAKKRFRVRPGGTVKR.

It belongs to the bacterial ribosomal protein bL35 family.

The polypeptide is Large ribosomal subunit protein bL35 (Polaromonas naphthalenivorans (strain CJ2)).